Consider the following 349-residue polypeptide: 2-oxoglutarate and iron-dependent oxygenase domain-containing protein 2 (349 aa).

Residues 211–305 (DSHRAFVVKY…RWNLILWMRA (95 aa)) enclose the Fe2OG dioxygenase domain. Fe cation is bound by residues histidine 231, aspartate 233, and histidine 286. Arginine 296 provides a ligand contact to 2-oxoglutarate.

The protein belongs to the OGFOD2 family. Requires Fe(2+) as cofactor. It depends on L-ascorbate as a cofactor.

This is 2-oxoglutarate and iron-dependent oxygenase domain-containing protein 2 (ogfod2) from Xenopus tropicalis (Western clawed frog).